A 316-amino-acid polypeptide reads, in one-letter code: Olfactory receptor 5P79 (316 aa).

The Extracellular segment spans residues 1 to 28 (MGILKDGNHTAVTEFILLGLTDDPVLKV). N8 is a glycosylation site (N-linked (GlcNAc...) asparagine). A helical membrane pass occupies residues 29–49 (VLFTIILCIYLVTVSGNLSTI). Residues 50–57 (LLIRVSSQ) are Cytoplasmic-facing. A helical transmembrane segment spans residues 58–78 (LHHPMYFFLSHLASVDIGISS). At 79 to 102 (SVTPNMLVNFLLERSTISYLGCGI) the chain is on the extracellular side. C100 and C192 are joined by a disulfide. A helical transmembrane segment spans residues 103 to 123 (QLGSGAFFGSTESFLLAAMAY). At 124-136 (DHFMAICNPLLYS) the chain is on the cytoplasmic side. Residues 137–157 (TKMSTQVCIQLLVGSYIGGFL) form a helical membrane-spanning segment. Residues 158-199 (NASSFILSFFSFLFCGPNKVNHFFCDFTPLVELSCSDNSVLL) lie on the Extracellular side of the membrane. A helical transmembrane segment spans residues 200-220 (ILDSFSAGSIIVITVLVIAIS). At 221–240 (YTYILITILKMHSTEGRHKA) the chain is on the cytoplasmic side. The chain crosses the membrane as a helical span at residues 241-261 (FSTCTSHLTAVTVFYGTVTFI). Over 262-274 (YVMPKSSYSTDQN) the chain is Extracellular. Residues 275–297 (KVLSVFYMIAIAIPMLNPLIYSL) traverse the membrane as a helical segment. Over 298 to 316 (RNNEIKNALKRQLSKKTFS) the chain is Cytoplasmic.

The protein belongs to the G-protein coupled receptor 1 family.

The protein resides in the cell membrane. Potential odorant receptor. The sequence is that of Olfactory receptor 5P79 from Mus musculus (Mouse).